A 557-amino-acid chain; its full sequence is MKEKIRKKILLAPEEPGVYIFKNKGVPIYIGKAKRLSSRLRSYLNPQTEKVFRIVEEADELETIVVMNEREAFILEANLIKKYRPKYNVRLKDTNFYPYIRISDDEIPYVEIVKRKLRDGTYFGPYTSVQFVRNLLEILQKIMGFRTCKSDLKRIKRPCFLYHLGRCTGPCIGNIESHGEAVRRLKEFLSGNMEEVFDYLKEKMETHSRMLDFENAAKYRDLLLNLSNVLESQGVVFEESISCDVLVHAHDLFVVLRVRNGYLVGKISFEMEGGNVEDFIREYYVSGRGDIPKTLILESDLDEMDYSSLGFEYVGPPRSTTEEDLLEKAKKNLENELKMRGLRKEALEELMKLLNMKDFPYRIEGIDISHLQGKYTVASLVVFEDGFPKKSDYRRYKIEQDHPDDYESIRTVVKRRYSKHPLPNLLFVDGGIGQVNAAVEALKEIGKDCPVVGLAKKEETVVFENREIKLPHDHPVLRLLVQIRDETHRFAVSYHRKRREKESLRSVLDSVPGIGPIRKKKLIEYFGSLENIRSASLEEIARVIGSAEIAKRILDVL.

In terms of domain architecture, GIY-YIG spans 14–89; it reads EEPGVYIFKN…IKKYRPKYNV (76 aa). In terms of domain architecture, UVR spans 194 to 229; the sequence is EEVFDYLKEKMETHSRMLDFENAAKYRDLLLNLSNV.

This sequence belongs to the UvrC family. As to quaternary structure, interacts with UvrB in an incision complex.

The protein resides in the cytoplasm. In terms of biological role, the UvrABC repair system catalyzes the recognition and processing of DNA lesions. UvrC both incises the 5' and 3' sides of the lesion. The N-terminal half is responsible for the 3' incision and the C-terminal half is responsible for the 5' incision. This Thermotoga petrophila (strain ATCC BAA-488 / DSM 13995 / JCM 10881 / RKU-1) protein is UvrABC system protein C.